The sequence spans 346 residues: Methylthioribose-1-phosphate isomerase (346 aa).

Substrate is bound by residues 50 to 52 (RGA), Arg93, and Gln196. The Proton donor role is filled by Asp237. A substrate-binding site is contributed by 247 to 248 (NK).

The protein belongs to the eIF-2B alpha/beta/delta subunits family. MtnA subfamily.

It carries out the reaction 5-(methylsulfanyl)-alpha-D-ribose 1-phosphate = 5-(methylsulfanyl)-D-ribulose 1-phosphate. It functions in the pathway amino-acid biosynthesis; L-methionine biosynthesis via salvage pathway; L-methionine from S-methyl-5-thio-alpha-D-ribose 1-phosphate: step 1/6. Catalyzes the interconversion of methylthioribose-1-phosphate (MTR-1-P) into methylthioribulose-1-phosphate (MTRu-1-P). The polypeptide is Methylthioribose-1-phosphate isomerase (Alkalilimnicola ehrlichii (strain ATCC BAA-1101 / DSM 17681 / MLHE-1)).